The following is a 309-amino-acid chain: Tagatose-6-phosphate kinase (309 aa).

The protein belongs to the carbohydrate kinase PfkB family. LacC subfamily.

The catalysed reaction is D-tagatofuranose 6-phosphate + ATP = D-tagatofuranose 1,6-bisphosphate + ADP + H(+). It functions in the pathway carbohydrate metabolism; D-tagatose 6-phosphate degradation; D-glyceraldehyde 3-phosphate and glycerone phosphate from D-tagatose 6-phosphate: step 1/2. The protein is Tagatose-6-phosphate kinase of Streptococcus pneumoniae serotype 4 (strain ATCC BAA-334 / TIGR4).